The following is a 240-amino-acid chain: Dihydromonapterin reductase (240 aa).

The active-site Proton acceptor is Tyr152.

Belongs to the short-chain dehydrogenases/reductases (SDR) family. FolM subfamily.

The enzyme catalyses (6S)-5,6,7,8-tetrahydrofolate + NADP(+) = 7,8-dihydrofolate + NADPH + H(+). The catalysed reaction is 7,8-dihydromonapterin + NADPH + H(+) = 5,6,7,8-tetrahydromonapterin + NADP(+). In terms of biological role, catalyzes the reduction of dihydromonapterin to tetrahydromonapterin. Also has lower activity with dihydrofolate. The protein is Dihydromonapterin reductase (folM) of Shigella flexneri serotype 5b (strain 8401).